A 354-amino-acid chain; its full sequence is UDP-N-acetylglucosamine--N-acetylmuramyl-(pentapeptide) pyrophosphoryl-undecaprenol N-acetylglucosamine transferase (354 aa).

UDP-N-acetyl-alpha-D-glucosamine is bound by residues 15 to 17 (TGG), asparagine 127, arginine 163, serine 191, isoleucine 244, 263 to 268 (ALTVSE), and glutamine 288.

The protein belongs to the glycosyltransferase 28 family. MurG subfamily.

Its subcellular location is the cell inner membrane. The catalysed reaction is di-trans,octa-cis-undecaprenyl diphospho-N-acetyl-alpha-D-muramoyl-L-alanyl-D-glutamyl-meso-2,6-diaminopimeloyl-D-alanyl-D-alanine + UDP-N-acetyl-alpha-D-glucosamine = di-trans,octa-cis-undecaprenyl diphospho-[N-acetyl-alpha-D-glucosaminyl-(1-&gt;4)]-N-acetyl-alpha-D-muramoyl-L-alanyl-D-glutamyl-meso-2,6-diaminopimeloyl-D-alanyl-D-alanine + UDP + H(+). Its pathway is cell wall biogenesis; peptidoglycan biosynthesis. Cell wall formation. Catalyzes the transfer of a GlcNAc subunit on undecaprenyl-pyrophosphoryl-MurNAc-pentapeptide (lipid intermediate I) to form undecaprenyl-pyrophosphoryl-MurNAc-(pentapeptide)GlcNAc (lipid intermediate II). This is UDP-N-acetylglucosamine--N-acetylmuramyl-(pentapeptide) pyrophosphoryl-undecaprenol N-acetylglucosamine transferase from Aliivibrio fischeri (strain ATCC 700601 / ES114) (Vibrio fischeri).